We begin with the raw amino-acid sequence, 129 residues long: M-zodatoxin-Lt8j (129 aa).

Residues 1-20 (MKYFVVALALVAAFACIAES) form the signal peptide. A propeptide spanning residues 21 to 60 (KPAESEHELAEVEEENELADLEDAVWLEHLADLSDLEEAR) is cleaved from the precursor.

The protein belongs to the cationic peptide 06 (cytoinsectotoxin) family. As to expression, expressed by the venom gland.

It is found in the secreted. Insecticidal, cytolytic and antimicrobial peptide. Forms voltage-dependent, ion-permeable channels in membranes. At high concentration causes cell membrane lysis. This is M-zodatoxin-Lt8j (cit 1-9) from Lachesana tarabaevi (Spider).